The primary structure comprises 95 residues: Large ribosomal subunit protein bL25 (95 aa).

The protein belongs to the bacterial ribosomal protein bL25 family. Part of the 50S ribosomal subunit; part of the 5S rRNA/L5/L18/L25 subcomplex. Contacts the 5S rRNA. Binds to the 5S rRNA independently of L5 and L18.

This is one of the proteins that binds to the 5S RNA in the ribosome where it forms part of the central protuberance. This Haemophilus influenzae (strain ATCC 51907 / DSM 11121 / KW20 / Rd) protein is Large ribosomal subunit protein bL25.